Consider the following 187-residue polypeptide: UPF0398 protein LJ_1195 (187 aa).

The protein belongs to the UPF0398 family.

This is UPF0398 protein LJ_1195 from Lactobacillus johnsonii (strain CNCM I-12250 / La1 / NCC 533).